A 688-amino-acid chain; its full sequence is Translation initiation factor IF-2 (688 aa).

A disordered region spans residues 53 to 101 (GAEKPSVADEFEVEEKVVRSKKNSNKNKKKGKANEDKRQDNFAGRQQTP). Basic residues predominate over residues 71–83 (RSKKNSNKNKKKG). The tr-type G domain maps to 190–359 (ERPAVVTIMG…LLVSEVEEYK (170 aa)). The segment at 199-206 (GHVDHGKT) is G1. Residue 199-206 (GHVDHGKT) participates in GTP binding. The G2 stretch occupies residues 224–228 (GITQH). The interval 245–248 (DTPG) is G3. GTP is bound by residues 245–249 (DTPGH) and 299–302 (NKMD). A G4 region spans residues 299-302 (NKMD). The tract at residues 335 to 337 (SAI) is G5.

The protein belongs to the TRAFAC class translation factor GTPase superfamily. Classic translation factor GTPase family. IF-2 subfamily.

It is found in the cytoplasm. One of the essential components for the initiation of protein synthesis. Protects formylmethionyl-tRNA from spontaneous hydrolysis and promotes its binding to the 30S ribosomal subunits. Also involved in the hydrolysis of GTP during the formation of the 70S ribosomal complex. In Bacillus mycoides (strain KBAB4) (Bacillus weihenstephanensis), this protein is Translation initiation factor IF-2.